The following is a 340-amino-acid chain: Uroporphyrinogen decarboxylase (340 aa).

Residues 21–25 (RQAGR), D71, Y148, S203, and H316 contribute to the substrate site.

It belongs to the uroporphyrinogen decarboxylase family. As to quaternary structure, homodimer.

The protein resides in the cytoplasm. The catalysed reaction is uroporphyrinogen III + 4 H(+) = coproporphyrinogen III + 4 CO2. The protein operates within porphyrin-containing compound metabolism; protoporphyrin-IX biosynthesis; coproporphyrinogen-III from 5-aminolevulinate: step 4/4. Its function is as follows. Catalyzes the decarboxylation of four acetate groups of uroporphyrinogen-III to yield coproporphyrinogen-III. The polypeptide is Uroporphyrinogen decarboxylase (Campylobacter hominis (strain ATCC BAA-381 / DSM 21671 / CCUG 45161 / LMG 19568 / NCTC 13146 / CH001A)).